The primary structure comprises 500 residues: Probable cytosol aminopeptidase 1 (500 aa).

The Mn(2+) site is built by Lys263 and Asp268. Residue Lys275 is part of the active site. Residues Asp287, Asp346, and Glu348 each contribute to the Mn(2+) site. Residue Arg350 is part of the active site.

It belongs to the peptidase M17 family. Requires Mn(2+) as cofactor.

It localises to the cytoplasm. The enzyme catalyses Release of an N-terminal amino acid, Xaa-|-Yaa-, in which Xaa is preferably Leu, but may be other amino acids including Pro although not Arg or Lys, and Yaa may be Pro. Amino acid amides and methyl esters are also readily hydrolyzed, but rates on arylamides are exceedingly low.. The catalysed reaction is Release of an N-terminal amino acid, preferentially leucine, but not glutamic or aspartic acids.. Functionally, presumably involved in the processing and regular turnover of intracellular proteins. Catalyzes the removal of unsubstituted N-terminal amino acids from various peptides. This Shewanella oneidensis (strain ATCC 700550 / JCM 31522 / CIP 106686 / LMG 19005 / NCIMB 14063 / MR-1) protein is Probable cytosol aminopeptidase 1 (pepA1).